The sequence spans 101 residues: MAKQSMKAREAKRAKLVAKFAEKRASLKAIISDVNVSEEDRWNAVLKLQTLPRDSSASRQRNRCNQTGRPHGYLRKFGLSRIKVREACMKGEIPGLRKASW.

The protein belongs to the universal ribosomal protein uS14 family. As to quaternary structure, part of the 30S ribosomal subunit. Contacts proteins S3 and S10.

Its function is as follows. Binds 16S rRNA, required for the assembly of 30S particles and may also be responsible for determining the conformation of the 16S rRNA at the A site. This Vibrio vulnificus (strain CMCP6) protein is Small ribosomal subunit protein uS14.